The primary structure comprises 726 residues: Fatty acid oxidation complex subunit alpha (726 aa).

The segment at Met1–Ser189 is enoyl-CoA hydratase/isomerase. Residue Asp296 participates in substrate binding. Residues Glu311–Val726 form a 3-hydroxyacyl-CoA dehydrogenase region. Residues Met324, Asp343, Val400–Glu402, Lys407, and Ser429 each bind NAD(+). His450 serves as the catalytic For 3-hydroxyacyl-CoA dehydrogenase activity. Asn453 is an NAD(+) binding site. Positions 500 and 660 each coordinate substrate.

This sequence in the N-terminal section; belongs to the enoyl-CoA hydratase/isomerase family. The protein in the C-terminal section; belongs to the 3-hydroxyacyl-CoA dehydrogenase family. In terms of assembly, heterotetramer of two alpha chains (FadB) and two beta chains (FadA).

The enzyme catalyses a (3S)-3-hydroxyacyl-CoA + NAD(+) = a 3-oxoacyl-CoA + NADH + H(+). It catalyses the reaction a (3S)-3-hydroxyacyl-CoA = a (2E)-enoyl-CoA + H2O. The catalysed reaction is a 4-saturated-(3S)-3-hydroxyacyl-CoA = a (3E)-enoyl-CoA + H2O. It carries out the reaction (3S)-3-hydroxybutanoyl-CoA = (3R)-3-hydroxybutanoyl-CoA. The enzyme catalyses a (3Z)-enoyl-CoA = a 4-saturated (2E)-enoyl-CoA. It catalyses the reaction a (3E)-enoyl-CoA = a 4-saturated (2E)-enoyl-CoA. It functions in the pathway lipid metabolism; fatty acid beta-oxidation. Functionally, involved in the aerobic and anaerobic degradation of long-chain fatty acids via beta-oxidation cycle. Catalyzes the formation of 3-oxoacyl-CoA from enoyl-CoA via L-3-hydroxyacyl-CoA. It can also use D-3-hydroxyacyl-CoA and cis-3-enoyl-CoA as substrate. This is Fatty acid oxidation complex subunit alpha from Aliivibrio salmonicida (strain LFI1238) (Vibrio salmonicida (strain LFI1238)).